The chain runs to 301 residues: MSWIIFYTVIAALLILDLRIIHKNNTIMSFKESVLFSLFYLVIACLFGIYVYYNTGADHAREYYTCFLIEKAMSLDNIFVISIIFQFFKIPWQYQHRVLFFGIIGVIIFRAVMIYGGIILINKFAWLLYIFAVILIATGIKTFYVSHKTFDIQNSYIYKSIIKNLNITPNLEGNKFIVKRNNKLYCTPLFISLVLIEAIDLVFAIDSIPAIFAITNDVYIIYTSNIFAILGLRALFFCLAEIVERFSYIKYSLALILIFISFKIFIHHYIAIPEYVAFTVTMTLLLFGIIASIIRKNMIDH.

9 helical membrane passes run 1-21 (MSWI…LRII), 33-53 (SVLF…YVYY), 72-92 (AMSL…KIPW), 101-121 (FGII…IILI), 124-144 (FAWL…KTFY), 194-214 (VLIE…IFAI), 220-240 (IIYT…FCLA), 253-273 (LALI…IAIP), and 274-294 (EYVA…ASII).

It belongs to the TerC family.

Its subcellular location is the cell membrane. This is an uncharacterized protein from Rickettsia conorii (strain ATCC VR-613 / Malish 7).